Consider the following 197-residue polypeptide: Xanthine phosphoribosyltransferase (197 aa).

Xanthine contacts are provided by leucine 20 and threonine 27. 128–132 serves as a coordination point for 5-phospho-alpha-D-ribose 1-diphosphate; sequence ANGQA. Residue lysine 156 coordinates xanthine.

This sequence belongs to the purine/pyrimidine phosphoribosyltransferase family. Xpt subfamily. Homodimer.

It is found in the cytoplasm. It catalyses the reaction XMP + diphosphate = xanthine + 5-phospho-alpha-D-ribose 1-diphosphate. The protein operates within purine metabolism; XMP biosynthesis via salvage pathway; XMP from xanthine: step 1/1. Converts the preformed base xanthine, a product of nucleic acid breakdown, to xanthosine 5'-monophosphate (XMP), so it can be reused for RNA or DNA synthesis. This chain is Xanthine phosphoribosyltransferase, found in Lactococcus lactis subsp. cremoris (strain MG1363).